Consider the following 137-residue polypeptide: Large ribosomal subunit protein uL16 (137 aa).

This sequence belongs to the universal ribosomal protein uL16 family. As to quaternary structure, part of the 50S ribosomal subunit.

In terms of biological role, binds 23S rRNA and is also seen to make contacts with the A and possibly P site tRNAs. The polypeptide is Large ribosomal subunit protein uL16 (Methylorubrum extorquens (strain CM4 / NCIMB 13688) (Methylobacterium extorquens)).